A 64-amino-acid chain; its full sequence is DNA gyrase inhibitor YacG (64 aa).

Residues Cys-7, Cys-10, Cys-26, and Cys-30 each coordinate Zn(2+). The segment at 44-64 is disordered; sequence RIPGEIDPELLPYPEEGEQWQ.

The protein belongs to the DNA gyrase inhibitor YacG family. As to quaternary structure, interacts with GyrB. The cofactor is Zn(2+).

Its function is as follows. Inhibits all the catalytic activities of DNA gyrase by preventing its interaction with DNA. Acts by binding directly to the C-terminal domain of GyrB, which probably disrupts DNA binding by the gyrase. The sequence is that of DNA gyrase inhibitor YacG from Aeromonas hydrophila subsp. hydrophila (strain ATCC 7966 / DSM 30187 / BCRC 13018 / CCUG 14551 / JCM 1027 / KCTC 2358 / NCIMB 9240 / NCTC 8049).